A 408-amino-acid chain; its full sequence is Acetate kinase (408 aa).

Asparagine 7 contributes to the Mg(2+) binding site. Residue lysine 14 participates in ATP binding. Residue arginine 91 participates in substrate binding. The active-site Proton donor/acceptor is aspartate 148. ATP is bound by residues 208–212, 283–285, and 331–335; these read HLGNG, DFR, and GIGEN. Glutamate 384 serves as a coordination point for Mg(2+).

The protein belongs to the acetokinase family. As to quaternary structure, homodimer. Mg(2+) is required as a cofactor. The cofactor is Mn(2+).

Its subcellular location is the cytoplasm. The enzyme catalyses acetate + ATP = acetyl phosphate + ADP. The protein operates within metabolic intermediate biosynthesis; acetyl-CoA biosynthesis; acetyl-CoA from acetate: step 1/2. In terms of biological role, catalyzes the formation of acetyl phosphate from acetate and ATP. Can also catalyze the reverse reaction. This chain is Acetate kinase, found in Methanosarcina acetivorans (strain ATCC 35395 / DSM 2834 / JCM 12185 / C2A).